We begin with the raw amino-acid sequence, 356 residues long: uncharacterized protein (356 aa).

The next 6 helical transmembrane spans lie at 2–22, 35–55, 76–96, 99–119, 124–144, and 152–172; these read IESI…FHRL, GYVT…PIPF, NMGY…FAFG, LLYG…GPFL, IVAL…LSIF, and EIAF…ITFV. The region spanning 218–353 is the GGDEF domain; the sequence is ESLALLLIDI…GRNQVMFNPI (136 aa).

It localises to the cell membrane. This is an uncharacterized protein from Staphylococcus haemolyticus (strain JCSC1435).